A 389-amino-acid polypeptide reads, in one-letter code: Lipid-A-disaccharide synthase (389 aa).

Belongs to the LpxB family.

The enzyme catalyses a lipid X + a UDP-2-N,3-O-bis[(3R)-3-hydroxyacyl]-alpha-D-glucosamine = a lipid A disaccharide + UDP + H(+). Its pathway is bacterial outer membrane biogenesis; LPS lipid A biosynthesis. Its function is as follows. Condensation of UDP-2,3-diacylglucosamine and 2,3-diacylglucosamine-1-phosphate to form lipid A disaccharide, a precursor of lipid A, a phosphorylated glycolipid that anchors the lipopolysaccharide to the outer membrane of the cell. This is Lipid-A-disaccharide synthase from Burkholderia cenocepacia (strain ATCC BAA-245 / DSM 16553 / LMG 16656 / NCTC 13227 / J2315 / CF5610) (Burkholderia cepacia (strain J2315)).